A 135-amino-acid polypeptide reads, in one-letter code: NNCPHDWLPMNGLCYKIFDELKAWEDAERFCRKYKPGCHLASFHTYGESLEIAEYISDYHKGQAEVWIGLWDKKKDFSWEWTDRSCTDYLTWDKNQPDVYQNKEFCVELVSLTGYRLWNDQVCESKNAFLCQCKF.

4 disulfide bridges follow: Cys-3-Cys-14, Cys-31-Cys-131, Cys-38-Cys-133, and Cys-106-Cys-123. The 123-residue stretch at 10 to 132 folds into the C-type lectin domain; it reads MNGLCYKIFD…CESKNAFLCQ (123 aa). 5 residues coordinate Ca(2+): Gln-96, Asp-98, Glu-104, Asn-119, and Asp-120. Residues 96–98 carry the Galactose-binding motif; it reads QPD.

The protein belongs to the true venom lectin family. Homodimer; disulfide-linked. In terms of tissue distribution, expressed by the venom gland.

It is found in the secreted. In terms of biological role, beta-galactoside lectin that agglutinates rabbit and human erythrocytes in a calcium-dependent fashion (MHC is 0.21 ug/ml on rabbit erythrocytes). Galactose (15 mM), lactose (20 mM), rhamnose (20 mM) and EGTA strongly inhibit this activity. In Agkistrodon piscivorus piscivorus (Eastern cottonmouth), this protein is C-type lectin APL.